The following is a 293-amino-acid chain: 4-hydroxy-tetrahydrodipicolinate synthase (293 aa).

Residue Thr-44 participates in pyruvate binding. Tyr-132 (proton donor/acceptor) is an active-site residue. Catalysis depends on Lys-162, which acts as the Schiff-base intermediate with substrate. Ile-204 is a pyruvate binding site.

Belongs to the DapA family. Homotetramer; dimer of dimers.

Its subcellular location is the cytoplasm. The catalysed reaction is L-aspartate 4-semialdehyde + pyruvate = (2S,4S)-4-hydroxy-2,3,4,5-tetrahydrodipicolinate + H2O + H(+). It functions in the pathway amino-acid biosynthesis; L-lysine biosynthesis via DAP pathway; (S)-tetrahydrodipicolinate from L-aspartate: step 3/4. In terms of biological role, catalyzes the condensation of (S)-aspartate-beta-semialdehyde [(S)-ASA] and pyruvate to 4-hydroxy-tetrahydrodipicolinate (HTPA). The protein is 4-hydroxy-tetrahydrodipicolinate synthase of Erythrobacter litoralis (strain HTCC2594).